Here is a 402-residue protein sequence, read N- to C-terminus: Zinc finger protein 587B (402 aa).

Residues 15-91 form the KRAB domain; that stretch reads VTFEDVAVKF…PVTGVSPKKA (77 aa). Residues 92 to 114 form a C2H2-type 1 zinc finger; the sequence is HPCEMCGPILGDILHVADHQGTH. A C2H2-type 2; degenerate zinc finger spans residues 120–142; it reads HRCEAWGNKLYDSGNFHQHQNEH. Glycyl lysine isopeptide (Lys-Gly) (interchain with G-Cter in SUMO2) cross-links involve residues K177, K200, and K253. 5 C2H2-type zinc fingers span residues 242–264, 270–292, 298–320, 326–348, and 354–383; these read YVCCECGKSFSKYVSFSNHQRVH, YECGECEKSFSQKSSLIQHQQFH, YGCEECGKYFSLEGYLRRHQKVH, YECGECGKSFSSNVNLKSHQRIH, and YKCGECEKSFSRKPSLSYHQRFGRPRWVDH. K366 participates in a covalent cross-link: Glycyl lysine isopeptide (Lys-Gly) (interchain with G-Cter in SUMO2).

Belongs to the krueppel C2H2-type zinc-finger protein family.

The protein localises to the nucleus. In terms of biological role, may be involved in transcriptional regulation. This Homo sapiens (Human) protein is Zinc finger protein 587B (ZNF587B).